Consider the following 255-residue polypeptide: Thiazole synthase (255 aa).

The Schiff-base intermediate with DXP role is filled by lysine 96. 1-deoxy-D-xylulose 5-phosphate is bound by residues glycine 157, 183–184 (AG), and 205–206 (NT).

It belongs to the ThiG family. Homotetramer. Forms heterodimers with either ThiH or ThiS.

The protein localises to the cytoplasm. It carries out the reaction [ThiS sulfur-carrier protein]-C-terminal-Gly-aminoethanethioate + 2-iminoacetate + 1-deoxy-D-xylulose 5-phosphate = [ThiS sulfur-carrier protein]-C-terminal Gly-Gly + 2-[(2R,5Z)-2-carboxy-4-methylthiazol-5(2H)-ylidene]ethyl phosphate + 2 H2O + H(+). Its pathway is cofactor biosynthesis; thiamine diphosphate biosynthesis. Functionally, catalyzes the rearrangement of 1-deoxy-D-xylulose 5-phosphate (DXP) to produce the thiazole phosphate moiety of thiamine. Sulfur is provided by the thiocarboxylate moiety of the carrier protein ThiS. In vitro, sulfur can be provided by H(2)S. This Heliobacterium modesticaldum (strain ATCC 51547 / Ice1) protein is Thiazole synthase.